A 451-amino-acid chain; its full sequence is V-type proton ATPase subunit S1 (451 aa).

The N-terminal stretch at 1-16 (MRVLFAVFSLIMACQA) is a signal peptide. Over 17 to 407 (YDAVLFSNSR…DCTGTFSSGS (391 aa)) the chain is Lumenal. N-linked (GlcNAc...) asparagine glycosylation is found at Asn-191, Asn-235, Asn-249, and Asn-330. A helical transmembrane segment spans residues 408–428 (WMGIVSALVLIAGLMFGYVML). Topologically, residues 429 to 451 (QSVQTMDRFDDPKQRQIVINVRE) are cytoplasmic.

The protein belongs to the vacuolar ATPase subunit S1 family. In terms of assembly, accessory component of the multisubunit proton-transporting vacuolar (V)-ATPase protein pump. In terms of tissue distribution, expressed in pharynx, hypodermis, intestine, vulval hypodermis and the H-shape excretory cell.

The protein resides in the membrane. Functionally, accessory subunit of the proton-transporting vacuolar (V)-ATPase protein pump, which is required for luminal acidification of secretory vesicles. In the germline, required for the trafficking of the receptor RME-2 to the oocyte cell membrane where it regulates the uptake of yolk proteins. Also, plays an essential role in osmoregulation in the embryo, probably by regulating the proper formation of the eggshell. This chain is V-type proton ATPase subunit S1, found in Caenorhabditis elegans.